The chain runs to 92 residues: MARSLWKGPFVDGYLLKKADAARGGSRNEVVKIWSRRSTILPQFVGITFGVHNGHKHIPVYVTEEMVGHKFGEFSPTRTFPGHAADKKAKRR.

The protein belongs to the universal ribosomal protein uS19 family.

Its function is as follows. Protein S19 forms a complex with S13 that binds strongly to the 16S ribosomal RNA. This is Small ribosomal subunit protein uS19 from Methylorubrum extorquens (strain CM4 / NCIMB 13688) (Methylobacterium extorquens).